Reading from the N-terminus, the 567-residue chain is Dihydroxy-acid dehydratase 2 (567 aa).

C56 contributes to the [2Fe-2S] cluster binding site. D88 lines the Mg(2+) pocket. [2Fe-2S] cluster is bound at residue C129. The Mg(2+) site is built by D130 and K131. K131 bears the N6-carboxylysine mark. C206 provides a ligand contact to [2Fe-2S] cluster. E457 contacts Mg(2+). The Proton acceptor role is filled by S483.

Belongs to the IlvD/Edd family. As to quaternary structure, homodimer. It depends on [2Fe-2S] cluster as a cofactor. Mg(2+) serves as cofactor.

The catalysed reaction is (2R)-2,3-dihydroxy-3-methylbutanoate = 3-methyl-2-oxobutanoate + H2O. The enzyme catalyses (2R,3R)-2,3-dihydroxy-3-methylpentanoate = (S)-3-methyl-2-oxopentanoate + H2O. Its pathway is amino-acid biosynthesis; L-isoleucine biosynthesis; L-isoleucine from 2-oxobutanoate: step 3/4. It participates in amino-acid biosynthesis; L-valine biosynthesis; L-valine from pyruvate: step 3/4. Functions in the biosynthesis of branched-chain amino acids. Catalyzes the dehydration of (2R,3R)-2,3-dihydroxy-3-methylpentanoate (2,3-dihydroxy-3-methylvalerate) into 2-oxo-3-methylpentanoate (2-oxo-3-methylvalerate) and of (2R)-2,3-dihydroxy-3-methylbutanoate (2,3-dihydroxyisovalerate) into 2-oxo-3-methylbutanoate (2-oxoisovalerate), the penultimate precursor to L-isoleucine and L-valine, respectively. This chain is Dihydroxy-acid dehydratase 2, found in Corynebacterium efficiens (strain DSM 44549 / YS-314 / AJ 12310 / JCM 11189 / NBRC 100395).